The chain runs to 372 residues: Queuine tRNA-ribosyltransferase (372 aa).

Asp-90 acts as the Proton acceptor in catalysis. Substrate contacts are provided by residues Asp-90–Phe-94, Asp-144, Gln-193, and Gly-220. Residues Gly-251–Asp-257 form an RNA binding region. Asp-270 (nucleophile) is an active-site residue. Positions Thr-275 to Arg-279 are RNA binding; important for wobble base 34 recognition. Residues Cys-308, Cys-310, Cys-313, and His-339 each contribute to the Zn(2+) site.

This sequence belongs to the queuine tRNA-ribosyltransferase family. Homodimer. Within each dimer, one monomer is responsible for RNA recognition and catalysis, while the other monomer binds to the replacement base PreQ1. The cofactor is Zn(2+).

The catalysed reaction is 7-aminomethyl-7-carbaguanine + guanosine(34) in tRNA = 7-aminomethyl-7-carbaguanosine(34) in tRNA + guanine. It functions in the pathway tRNA modification; tRNA-queuosine biosynthesis. Functionally, catalyzes the base-exchange of a guanine (G) residue with the queuine precursor 7-aminomethyl-7-deazaguanine (PreQ1) at position 34 (anticodon wobble position) in tRNAs with GU(N) anticodons (tRNA-Asp, -Asn, -His and -Tyr). Catalysis occurs through a double-displacement mechanism. The nucleophile active site attacks the C1' of nucleotide 34 to detach the guanine base from the RNA, forming a covalent enzyme-RNA intermediate. The proton acceptor active site deprotonates the incoming PreQ1, allowing a nucleophilic attack on the C1' of the ribose to form the product. After dissociation, two additional enzymatic reactions on the tRNA convert PreQ1 to queuine (Q), resulting in the hypermodified nucleoside queuosine (7-(((4,5-cis-dihydroxy-2-cyclopenten-1-yl)amino)methyl)-7-deazaguanosine). This Sulfurimonas denitrificans (strain ATCC 33889 / DSM 1251) (Thiomicrospira denitrificans (strain ATCC 33889 / DSM 1251)) protein is Queuine tRNA-ribosyltransferase.